The following is a 349-amino-acid chain: MTEFDNLTWLHGKPQGSGLLKANPEDFVVVEDLGFTPDGEGEHILLRILKNGCNTRFVADALAKFLKIHAREVSFAGQKDKHAVTEQWLCARVPGKEMPDFSAFQLEGCKVLEYARHKRKLRLGALKGNAFTLVLREISDRRDVETRLQAIRDGGVPNYFGAQRFGIGGSNLQGALRWAQSNAPVRDRNKRSFWLSAARSALFNQIVHQRLKKPDFNQVVDGDALQLAGRGSWFVATSEELPELQRRVDEKELMITASLPGSGEWGTQRAALAFEQDAIAQETVLQSLLLREKVEASRRAMLLYPQQLSWNWWDDVTVELRFWLPAGSFATSVVRGLINTMGDYAHIAE.

F27 contributes to the substrate binding site. D80 (nucleophile) is an active-site residue. N129 contacts substrate. The TRUD domain maps to 155-303 (GVPNYFGAQR…VEASRRAMLL (149 aa)). F329 is a binding site for substrate.

Belongs to the pseudouridine synthase TruD family.

The enzyme catalyses uridine(13) in tRNA = pseudouridine(13) in tRNA. Its function is as follows. Responsible for synthesis of pseudouridine from uracil-13 in transfer RNAs. In Salmonella choleraesuis (strain SC-B67), this protein is tRNA pseudouridine synthase D.